An 87-amino-acid chain; its full sequence is Small ribosomal subunit protein bS20 (87 aa).

Belongs to the bacterial ribosomal protein bS20 family.

Its function is as follows. Binds directly to 16S ribosomal RNA. In Clostridium perfringens (strain ATCC 13124 / DSM 756 / JCM 1290 / NCIMB 6125 / NCTC 8237 / Type A), this protein is Small ribosomal subunit protein bS20.